Reading from the N-terminus, the 507-residue chain is Maturase K (507 aa).

This sequence belongs to the intron maturase 2 family. MatK subfamily.

It localises to the plastid. Its subcellular location is the chloroplast. Its function is as follows. Usually encoded in the trnK tRNA gene intron. Probably assists in splicing its own and other chloroplast group II introns. This Euryale ferox (Gorgon plant) protein is Maturase K.